Reading from the N-terminus, the 309-residue chain is Type II methyltransferase M.HgiDI (309 aa).

Positions 1–297 (MKTIDLFAGC…TSLQAYLNQP (297 aa)) constitute an SAM-dependent MTase C5-type domain. Residue Cys-75 is part of the active site.

The protein belongs to the class I-like SAM-binding methyltransferase superfamily. C5-methyltransferase family.

It carries out the reaction a 2'-deoxycytidine in DNA + S-adenosyl-L-methionine = a 5-methyl-2'-deoxycytidine in DNA + S-adenosyl-L-homocysteine + H(+). A methylase that recognizes the double-stranded sequence 5'-GRCGYC-3', methylates C-? on both strands, and protects the DNA from cleavage by the HgiDI endonuclease. The polypeptide is Type II methyltransferase M.HgiDI (Herpetosiphon aurantiacus (Herpetosiphon giganteus)).